The chain runs to 82 residues: MVTIRLARGGAKKRPFYQVVVTDSRNARDGRFIERVGFFNPIATGSAEGLRLDLDRVSHWVSQGATVSDRVAALIKEAQKAA.

The protein belongs to the bacterial ribosomal protein bS16 family.

This is Small ribosomal subunit protein bS16 from Edwardsiella ictaluri (strain 93-146).